Here is a 1073-residue protein sequence, read N- to C-terminus: Ring-infected erythrocyte surface antigen (1073 aa).

The signal sequence occupies residues 1–65 (MRPFHAYSWI…IIGILYIILN (65 aa)). Asparagine 71 carries an N-linked (GlcNAc...) asparagine glycan. Positions 428 to 444 (DTSEEESVEENEEEHTV) are enriched in acidic residues. Residues 428-514 (DTSEEESVEE…SDVQQTSEAA (87 aa)) are disordered. Positions 436 to 504 (EENEEEHTVD…VAEEHVEEPA (69 aa)) are tandem repeats 1. A compositionally biased stretch (basic and acidic residues) spans 445 to 456 (DDEHVEEHTADD). Over residues 457–470 (EHVEEPTVADDEHV) the composition is skewed to acidic residues. Basic and acidic residues predominate over residues 476–502 (ADEHVEEPTVAEEHVEEPTVAEEHVEE). One can recognise a J domain in the interval 521 to 589 (DTLYYDILGV…KRWYNKYGYD (69 aa)). Asparagine 639, asparagine 773, and asparagine 777 each carry an N-linked (GlcNAc...) asparagine glycan. The interval 891-1073 (NAEENVEHDA…VEEHNEEYDE (183 aa)) is tandem repeats 2. Over residues 894-930 (ENVEHDAEENVEHDAEENVEHDAEENVEHDAEENVEH) the composition is skewed to basic and acidic residues. A disordered region spans residues 894–1073 (ENVEHDAEEN…VEEHNEEYDE (180 aa)). Positions 931 to 1073 (DAEENVEENV…VEEHNEEYDE (143 aa)) are enriched in acidic residues.

Post-translationally, the Tyr residues in the variant tetrameric sequences in the RESA repeat are possibly phosphorylated (by homology with band 3).

It is found in the cell membrane. Functionally, may disrupt the normal intermolecular interactions of the cytoplasmic domain of band 3 and thereby facilitate the invagination of the red cell membrane which is necessary for the formation of the parasitophorous vacuole. In Plasmodium falciparum (isolate FC27 / Papua New Guinea), this protein is Ring-infected erythrocyte surface antigen (RESA).